A 362-amino-acid chain; its full sequence is Aminomethyltransferase (362 aa).

This sequence belongs to the GcvT family. As to quaternary structure, the glycine cleavage system is composed of four proteins: P, T, L and H.

The catalysed reaction is N(6)-[(R)-S(8)-aminomethyldihydrolipoyl]-L-lysyl-[protein] + (6S)-5,6,7,8-tetrahydrofolate = N(6)-[(R)-dihydrolipoyl]-L-lysyl-[protein] + (6R)-5,10-methylene-5,6,7,8-tetrahydrofolate + NH4(+). The glycine cleavage system catalyzes the degradation of glycine. The chain is Aminomethyltransferase from Chlorobium limicola (strain DSM 245 / NBRC 103803 / 6330).